A 354-amino-acid polypeptide reads, in one-letter code: MGCTLSAEDKAAVERSKMIDRNLREDGEKAAKEVKLLLLGAGESGKSTIVKQMKIIHEDGYSEDECKQYKVVVYSNTIQSIIAIIRAMGRLKIDFGEAARADDARQLFVLAGSAEEGVMTPELAGVIKRLWRDGGVQACFSRSREYQLNDSASYYLNDLDRISQSNYIPTQQDVLRTRVKTTGIVETHFTFKDLYFKMFDVGGQRSERKKWIHCFEGVTAIIFCVALSDYDLVLAEDEEMNRMHESMKLFDSICNNKWFTETSIILFLNKKDLFEEKIKRSPLTICYPEYTGSNTYEEAAAYIQCQFEDLNRRKDTKEIYTHFTCATDTKNVQFVFDAVTDVIIKNNLKECGLY.

Glycine 2 is lipidated: N-myristoyl glycine. Cysteine 3 is lipidated: S-palmitoyl cysteine. The 323-residue stretch at 32–354 (KEVKLLLLGA…KNNLKECGLY (323 aa)) folds into the G-alpha domain. The segment at 35–48 (KLLLLGAGESGKST) is G1 motif. Residues glycine 42, glutamate 43, serine 44, glycine 45, lysine 46, serine 47, threonine 48, aspartate 150, serine 151, leucine 175, arginine 176, threonine 177, arginine 178, valine 179, lysine 180, threonine 181, valine 201, and glycine 203 each contribute to the GTP site. GDP is bound by residues glutamate 43, serine 44, glycine 45, lysine 46, serine 47, and threonine 48. Serine 47 serves as a coordination point for Mg(2+). GDP is bound by residues serine 151, leucine 175, arginine 176, threonine 177, and arginine 178. The tract at residues 173-181 (DVLRTRVKT) is G2 motif. Residue arginine 178 is modified to ADP-ribosylarginine; by cholera toxin. A Mg(2+)-binding site is contributed by threonine 181. Residues 196 to 205 (FKMFDVGGQR) form a G3 motif region. Glutamine 204 carries the post-translational modification Deamidated glutamine; by Photorhabdus PAU_02230. A G4 motif region spans residues 265 to 272 (ILFLNKKD). 7 residues coordinate GTP: asparagine 269, lysine 270, aspartate 272, leucine 273, cysteine 325, alanine 326, and threonine 327. GDP is bound by residues asparagine 269, lysine 270, and aspartate 272. Residues 324–329 (TCATDT) form a G5 motif region. GDP-binding residues include cysteine 325 and alanine 326. An ADP-ribosylcysteine; by pertussis toxin modification is found at cysteine 351.

This sequence belongs to the G-alpha family. G(i/o/t/z) subfamily. Heterotrimeric G proteins are composed of 3 units; alpha, beta and gamma. The alpha subunit contains the guanine nucleotide binding site. GTP binding causes dissociation of the heterotrimer, liberating the individual subunits so that they can interact with downstream effector proteins. Forms a complex with CCDC88A/GIV and EGFR which leads to enhanced EGFR signaling and triggering of cell migration; ligand stimulation is required for recruitment of GNAI3 to the complex. Interacts (inactive GDP-bound form) with CCDC88A/GIV (via GBA motif); the interaction leads to activation of GNAI3. Interacts (inactive GDP-bound form) with CCDC88C/DAPLE (via GBA motif); the interaction leads to activation of GNAI3. Interacts (inactive GDP-bound form) with NUCB1 (via GBA motif) and NUCB2 (via GBA motif); the interaction leads to activation of GNAI3. Interacts (inactive GDP-bound form) with PLCD4 (via GBA motif); the interaction leads to activation of GNAI3. Interacts with INSR; the interaction is probably mediated by CCDC88A/GIV. Interacts with GPSM1. Interacts (GDP-bound form) with GPSM2 (via GoLoco domains). Does not interact with RGS2. Interacts with RGS8 and RGS10; this strongly enhances the intrinsic GTPase activity. Interacts with RGS16; this strongly enhances the intrinsic GTPase activity. Interacts with RGS12. Interacts (via active GTP- or inactive GDP-bound form) with RGS14. Interacts (via active GTP-bound form) with TRPC5 (via ANK repeats) in a homotetrameric ion channel; the interaction is direct and activates the channel activity. (Microbial infection) Deamidated at Gln-204 by Photorhabdus asymbiotica toxin PAU_02230, blocking GTP hydrolysis of heterotrimeric GNAQ or GNA11 and G-alphai (GNAI1, GNAI2 or GNAI3) proteins, thereby activating RhoA.

The protein resides in the cytoplasm. Its subcellular location is the cell membrane. It is found in the cytoskeleton. The protein localises to the microtubule organizing center. It localises to the centrosome. Its function is as follows. Heterotrimeric guanine nucleotide-binding proteins (G proteins) function as transducers downstream of G protein-coupled receptors (GPCRs) in numerous signaling cascades. The alpha chain contains the guanine nucleotide binding site and alternates between an active, GTP-bound state and an inactive, GDP-bound state. Signaling by an activated GPCR promotes GDP release and GTP binding. The alpha subunit has a low GTPase activity that converts bound GTP to GDP, thereby terminating the signal. Both GDP release and GTP hydrolysis are modulated by numerous regulatory proteins. Signaling is mediated via effector proteins, such as adenylate cyclase. Inhibits adenylate cyclase activity, leading to decreased intracellular cAMP levels. Stimulates the activity of receptor-regulated K(+) channels. The active GTP-bound form prevents the association of RGS14 with centrosomes and is required for the translocation of RGS14 from the cytoplasm to the plasma membrane. May play a role in cell division. The active GTP-bound form activates the calcium permeant TRPC5 ion channels. This chain is Guanine nucleotide-binding protein G(i) subunit alpha-3 (GNAI3), found in Homo sapiens (Human).